The following is a 465-amino-acid chain: SET domain-containing protein 3 (465 aa).

The SET domain occupies 18-265 (DKVTVKWDKK…AREELLDSYG (248 aa)).

This sequence belongs to the class V-like SAM-binding methyltransferase superfamily.

The polypeptide is SET domain-containing protein 3 (set-3) (Caenorhabditis elegans).